Here is a 293-residue protein sequence, read N- to C-terminus: Cytochrome c biogenesis protein CcsA (293 aa).

The next 8 membrane-spanning stretches (helical) occupy residues 12 to 32, 39 to 59, 78 to 98, 99 to 119, 142 to 162, 216 to 236, 250 to 267, and 273 to 293; these read INIL…AKLT, VFSL…GMLL, LFLS…LSII, GAIG…ILPP, VMIF…IYVI, FISL…VWAN, TWAL…HIRI, and KIYA…VTWE.

It belongs to the CcmF/CycK/Ccl1/NrfE/CcsA family. As to quaternary structure, may interact with Ccs1.

It localises to the plastid. The protein localises to the chloroplast thylakoid membrane. Functionally, required during biogenesis of c-type cytochromes (cytochrome c6 and cytochrome f) at the step of heme attachment. In Cyanidium caldarium (Red alga), this protein is Cytochrome c biogenesis protein CcsA.